A 643-amino-acid polypeptide reads, in one-letter code: Clathrin interactor 1 (643 aa).

The ENTH domain occupies 16 to 149 (NVVMNYSEIE…QDDDRLREER (134 aa)). R29 provides a ligand contact to a 1,2-diacyl-sn-glycero-3-phospho-(1D-myo-inositol-4,5-bisphosphate). The segment at 52 to 54 (FMY) is interaction with VTI1B. A 1,2-diacyl-sn-glycero-3-phospho-(1D-myo-inositol-4,5-bisphosphate) is bound at residue R67. Interaction with VTI1B regions lie at residues 94–96 (SER) and 142–153 (DDRLREERKKAK). Phosphoserine is present on residues S163, S166, S173, S205, S210, S227, S245, and S299. Residues 219–331 (FRRKDREDSP…SSGDLVDLFD (113 aa)) form a disordered region. The span at 222-239 (KDREDSPERCSDSDEEKK) shows a compositional bias: basic and acidic residues. Residues 300-310 (PDQNASTHTPQ) show a composition bias toward polar residues. At T308 the chain carries Phosphothreonine. Residues 311–323 (SSLKTSVPSSKSS) show a composition bias toward low complexity. Phosphoserine is present on residues S312 and S642.

It belongs to the epsin family. In terms of assembly, binds clathrin heavy chain and AP-2. Interacts with VTI1B. Interacts with GGA2 (via GAE domain). Interacts with AP1G1 (via GAE domain). Interacts with AP1G2 (via GAE domain).

It localises to the cytoplasm. It is found in the perinuclear region. The protein resides in the membrane. The protein localises to the cytoplasmic vesicle. Its subcellular location is the clathrin-coated vesicle. Binds to membranes enriched in phosphatidylinositol 4,5-bisphosphate (PtdIns(4,5)P2). May have a role in transport via clathrin-coated vesicles from the trans-Golgi network to endosomes. Stimulates clathrin assembly. In Bos taurus (Bovine), this protein is Clathrin interactor 1 (CLINT1).